The chain runs to 145 residues: UPF0179 protein Msm_0285 (145 aa).

This sequence belongs to the UPF0179 family.

The protein is UPF0179 protein Msm_0285 of Methanobrevibacter smithii (strain ATCC 35061 / DSM 861 / OCM 144 / PS).